Consider the following 245-residue polypeptide: 4-hydroxy-tetrahydrodipicolinate reductase (245 aa).

Residues 7-12, 75-77, and 102-105 each bind NAD(+); these read GAKGKV, GTT, and APNF. Residue His132 is the Proton donor/acceptor of the active site. His133 is a binding site for (S)-2,3,4,5-tetrahydrodipicolinate. The Proton donor role is filled by Lys136. 142-143 lines the (S)-2,3,4,5-tetrahydrodipicolinate pocket; it reads GT.

The protein belongs to the DapB family.

Its subcellular location is the cytoplasm. The catalysed reaction is (S)-2,3,4,5-tetrahydrodipicolinate + NAD(+) + H2O = (2S,4S)-4-hydroxy-2,3,4,5-tetrahydrodipicolinate + NADH + H(+). It catalyses the reaction (S)-2,3,4,5-tetrahydrodipicolinate + NADP(+) + H2O = (2S,4S)-4-hydroxy-2,3,4,5-tetrahydrodipicolinate + NADPH + H(+). It participates in amino-acid biosynthesis; L-lysine biosynthesis via DAP pathway; (S)-tetrahydrodipicolinate from L-aspartate: step 4/4. Catalyzes the conversion of 4-hydroxy-tetrahydrodipicolinate (HTPA) to tetrahydrodipicolinate. The sequence is that of 4-hydroxy-tetrahydrodipicolinate reductase from Mycobacterium bovis (strain ATCC BAA-935 / AF2122/97).